The following is a 171-amino-acid chain: Photosystem I assembly protein Ycf3 (171 aa).

3 TPR repeats span residues 35 to 68, 72 to 105, and 120 to 153; these read AFTY…EVDA, SYIL…NPYL, and GEQA…APTN.

Belongs to the Ycf3 family.

Its subcellular location is the plastid. It is found in the chloroplast thylakoid membrane. Functionally, essential for the assembly of the photosystem I (PSI) complex. May act as a chaperone-like factor to guide the assembly of the PSI subunits. This is Photosystem I assembly protein Ycf3 from Nephroselmis olivacea (Green alga).